The primary structure comprises 441 residues: Glutamyl-tRNA reductase (441 aa).

Substrate is bound by residues 64 to 67 (TCNR), Ser-123, 128 to 130 (ETQ), and Gln-134. Cys-65 functions as the Nucleophile in the catalytic mechanism. Position 203–208 (203–208 (GAGEMI)) interacts with NADP(+).

Belongs to the glutamyl-tRNA reductase family. In terms of assembly, homodimer.

The catalysed reaction is (S)-4-amino-5-oxopentanoate + tRNA(Glu) + NADP(+) = L-glutamyl-tRNA(Glu) + NADPH + H(+). It participates in porphyrin-containing compound metabolism; protoporphyrin-IX biosynthesis; 5-aminolevulinate from L-glutamyl-tRNA(Glu): step 1/2. Functionally, catalyzes the NADPH-dependent reduction of glutamyl-tRNA(Glu) to glutamate 1-semialdehyde (GSA). The sequence is that of Glutamyl-tRNA reductase from Burkholderia pseudomallei (strain K96243).